Consider the following 326-residue polypeptide: D-alanine--D-alanine ligase (326 aa).

The ATP-grasp domain occupies 121–320 (ISVLRPYGIK…LKDLFGSTIE (200 aa)). 149–204 (VDKVGLPCFVKANRAGSSFGVTKVKTEDEIISAAKTAFTEDDEAIIESFLDGTEVS) is an ATP binding site. Residues Glu275, Glu287, and Asn289 each contribute to the Mg(2+) site.

This sequence belongs to the D-alanine--D-alanine ligase family. Requires Mg(2+) as cofactor. It depends on Mn(2+) as a cofactor.

Its subcellular location is the cytoplasm. The enzyme catalyses 2 D-alanine + ATP = D-alanyl-D-alanine + ADP + phosphate + H(+). Its pathway is cell wall biogenesis; peptidoglycan biosynthesis. Cell wall formation. This Christiangramia forsetii (strain DSM 17595 / CGMCC 1.15422 / KT0803) (Gramella forsetii) protein is D-alanine--D-alanine ligase.